An 85-amino-acid polypeptide reads, in one-letter code: MKEGIHPTYRKVLFHDTSVNKYFLIGSTLQTDRTMKWEDGKEYPYMTLDISSESHPFYTGEQRVVSTEGRVANFNRRFGALKGKV.

It belongs to the bacterial ribosomal protein bL31 family. Type B subfamily. As to quaternary structure, part of the 50S ribosomal subunit.

The polypeptide is Large ribosomal subunit protein bL31B (Aliivibrio salmonicida (strain LFI1238) (Vibrio salmonicida (strain LFI1238))).